A 573-amino-acid chain; its full sequence is Diflavin flavoprotein A 1 (573 aa).

The tract at residues 43–236 is zinc metallo-hydrolase; it reads QNGTTYNSYL…GTISTVANGH (194 aa). The Fe cation site is built by H92, E94, D96, H159, D178, and H236. In terms of domain architecture, Flavodoxin-like spans 265-401; it reads VVVFYVADYG…LCDESGTDLG (137 aa). Residues 424–573 form a flavodoxin-reductase-like region; the sequence is IGRISGGLYI…VHHRKVGNYY (150 aa).

This sequence in the N-terminal section; belongs to the zinc metallo-hydrolase group 3 family. The protein in the C-terminal section; belongs to the flavodoxin reductase family. As to quaternary structure, homodimer. Requires Fe cation as cofactor. It depends on FAD as a cofactor. The cofactor is FMN.

Mediates electron transfer from NADH to oxygen, reducing it to water. This modular protein has 3 redox cofactors, in other organisms the same activity requires 2 or 3 proteins. The polypeptide is Diflavin flavoprotein A 1 (dfa1) (Synechocystis sp. (strain ATCC 27184 / PCC 6803 / Kazusa)).